The sequence spans 221 residues: Alpha-ketoglutarate-dependent dioxygenase alkB homolog 7, mitochondrial (221 aa).

Residues 1 to 23 (MAGSRRLAMRLLSGCAWVRGSDS) constitute a mitochondrion transit peptide. 2 residues coordinate Fe cation: histidine 121 and aspartate 123. Tyrosine 165 serves as a coordination point for 2-oxoglutarate. Fe cation is bound at residue histidine 177. 2-oxoglutarate-binding positions include 197–199 (RIS) and arginine 203.

This sequence belongs to the alkB family. Requires Fe(2+) as cofactor. In terms of tissue distribution, widely expressed.

It is found in the mitochondrion matrix. Its function is as follows. May function as protein hydroxylase; can catalyze auto-hydroxylation at Leu-110 (in vitro), but this activity may be due to the absence of the true substrate. Required to induce programmed necrosis in response to DNA damage caused by cytotoxic alkylating agents. Acts by triggering the collapse of mitochondrial membrane potential and loss of mitochondrial function that leads to energy depletion and cell death. ALKBH7-mediated necrosis is probably required to prevent the accumulation of cells with DNA damage. Does not display DNA demethylase activity. Involved in fatty acid metabolism. In Mus musculus (Mouse), this protein is Alpha-ketoglutarate-dependent dioxygenase alkB homolog 7, mitochondrial (Alkbh7).